Here is a 296-residue protein sequence, read N- to C-terminus: MLNRFSYSSNAWHNLRVDGPDADGIAVIVLARSQSRNALTLPMLTDMVQLLSAMDADDSVKCIVFTGEGQFFCSGVDLTEGFGEIGKTRDTHRDAGGKLALAIHNCRKPTIAAINGTAVGVGITMTLPMSIRIAAESAKISFPFVRRGIVADAASSFYLPRLIGYGRALHLFTTGALYPAESGLLHGLFSETVNPASSTLPRALEVARDIAVNASQVGVYLTRDLIYRSLRSPEQAHLLESATLYTRYQSQDFEEGVKSFLEKRRPRFQDTMHEQSGEGVLERGDCVVSLASKPKL.

Residues 294-296 (PKL) carry the Peroxisomal targeting signal type 1 motif.

This sequence belongs to the enoyl-CoA hydratase/isomerase family.

It is found in the peroxisome. It carries out the reaction a (3S)-3-hydroxyacyl-CoA = a (2E)-enoyl-CoA + H2O. It catalyses the reaction a 4-saturated-(3S)-3-hydroxyacyl-CoA = a (3E)-enoyl-CoA + H2O. Its pathway is mycotoxin biosynthesis. Functionally, enoyl-CoA hydratase; part of the gene clusters that mediate the biosynthesis of the host-selective toxins (HSTs) ACT-toxins responsible for brown spot of tangerine disease by the tangerine pathotype which affects tangerines and mandarins. ACT-toxins consist of three moieties, 9,10-epoxy-8-hydroxy-9-methyl-decatrienoic acid (EDA), valine and a polyketide. ACT-toxin I is toxic to both citrus and pear; toxin II the 5''-deoxy derivative of ACT-toxin I, is highly toxic to pear and slightly toxic to citrus. On cellular level, ACT-toxins affect plasma membrane of susceptible cells and cause a sudden increase in loss of K(+) after a few minutes of toxin treatment. The acyl-CoA ligase ACTT1, the hydrolase ACTT2, the enoyl-CoA hydratases ACTT3 and ACTT6, and the acyl-CoA synthetase ACTT5 are all involved in the biosynthesis of the AK-, AF- and ACT-toxin common 9,10-epoxy-8-hydroxy-9-methyl-decatrienoic acid (EDA) structural moiety. The exact role of each enzyme, and of additional enzymes identified within the AF-toxin clusters have still to be determined. On the other hand, ACTTS1 to ACTTS4 are specific to the tangerine pathotype. The function of ACTTS3 is to elongate the polyketide chain portion of ACT-toxin that is unique to this toxin. The enoyl-reductase ACTTS2 might complement the missing enoyl-reductase (ER) domain in ACTTS3 in the synthesis of the polyketide portion of ACT-toxin. The roles of the nonribosomal peptide synthetases-related proteins ACTTS1 and ACTTS4 have also still not been elucidated. The protein is Enoyl-CoA hydratase ACTT3 of Alternaria alternata (Alternaria rot fungus).